We begin with the raw amino-acid sequence, 522 residues long: Sugar transport protein MST2 (522 aa).

Residues 1 to 24 (MAAATAADVAEDTASVYSGKLTLY) lie on the Cytoplasmic side of the membrane. Residues 25-45 (VFLTCGVAATGGLIIGYDIGI) form a helical membrane-spanning segment. Topologically, residues 46–82 (SGGVTSMDTFLGKFFPSVLHQEQTAQGTSQYCKFNSQ) are extracellular. The chain crosses the membrane as a helical span at residues 83 to 103 (PLTAFTSSLYLAALVASFFVA). At 104-111 (SFTRALGR) the chain is on the cytoplasmic side. Residues 112 to 132 (KWSMFGGGVSFLAGATLNGAA) traverse the membrane as a helical segment. At 133 to 134 (RN) the chain is on the extracellular side. Residues 135 to 155 (VAMLIVGRILLGIGVAFCGLS) form a helical membrane-spanning segment. At 156-169 (TPIYLSEMAPPRLR) the chain is on the cytoplasmic side. The helical transmembrane segment at 170–190 (GMLNIGLQLMITVGIFSANLV) threads the bilayer. Residues 191 to 204 (NYGAAKIRGGWGWR) are Extracellular-facing. The helical transmembrane segment at 205–225 (VSLGLAAAPACVIAVGSLFLP) threads the bilayer. The Cytoplasmic segment spans residues 226–291 (DSPSSLINRG…DVLQRRYRPQ (66 aa)). The chain crosses the membrane as a helical span at residues 292-312 (LAMAVLIPFFQQLTGINVIMF). At 313 to 329 (YAPVLFKTIGLGGDASL) the chain is on the extracellular side. Residues 330-350 (MSAVITGLVNIVATFVSIATV) traverse the membrane as a helical segment. The Cytoplasmic segment spans residues 351-361 (DSLGRRKLLFQ). The chain crosses the membrane as a helical span at residues 362 to 382 (GGCQMLVSQVIIGTLIGVVFG). The Extracellular portion of the chain corresponds to 383–391 (TSGDGNISR). A helical membrane pass occupies residues 392 to 412 (ALAVCIVVFICVYVAGFAWSW). The Cytoplasmic portion of the chain corresponds to 413–434 (GPLGVLLPSEIFPLEVRPAGQS). Residues 435–455 (ISVAVNMLCTFAVAEAFLPML) traverse the membrane as a helical segment. Topologically, residues 456 to 459 (CHMR) are extracellular. A helical membrane pass occupies residues 460–480 (FGLFYFFSGWVLVMTLFVSAF). Over 481-522 (LPETKGVPIEKMTVVWRTHWFWGRFYCNQDADAHVQVANSKV) the chain is Cytoplasmic.

It belongs to the major facilitator superfamily. Sugar transporter (TC 2.A.1.1) family.

The protein resides in the membrane. Functionally, mediates active uptake of hexoses by sugar:proton symport. Can transport glucose. The protein is Sugar transport protein MST2 of Oryza sativa subsp. japonica (Rice).